Reading from the N-terminus, the 251-residue chain is CDP-diacylglycerol pyrophosphatase (251 aa).

The helical transmembrane segment at 5–25 threads the bilayer; that stretch reads GYFLLAVIVIVAAAGVGYWKF.

The protein belongs to the Cdh family.

Its subcellular location is the cell inner membrane. The catalysed reaction is a CDP-1,2-diacyl-sn-glycerol + H2O = a 1,2-diacyl-sn-glycero-3-phosphate + CMP + 2 H(+). It participates in phospholipid metabolism; CDP-diacylglycerol degradation; phosphatidate from CDP-diacylglycerol: step 1/1. The chain is CDP-diacylglycerol pyrophosphatase from Salmonella paratyphi A (strain ATCC 9150 / SARB42).